The following is a 212-amino-acid chain: Adenylate kinase (212 aa).

An ATP-binding site is contributed by G10–T15. The NMP stretch occupies residues S30–V59. Residues T31, R36, E57 to V59, G86 to R89, and Q93 contribute to the AMP site. The segment at G127 to D159 is LID. ATP contacts are provided by residues R128 and T137–F138. Residues R156 and R167 each coordinate AMP. Q195 provides a ligand contact to ATP.

Belongs to the adenylate kinase family. Monomer.

Its subcellular location is the cytoplasm. The enzyme catalyses AMP + ATP = 2 ADP. It functions in the pathway purine metabolism; AMP biosynthesis via salvage pathway; AMP from ADP: step 1/1. Catalyzes the reversible transfer of the terminal phosphate group between ATP and AMP. Plays an important role in cellular energy homeostasis and in adenine nucleotide metabolism. The protein is Adenylate kinase of Streptococcus agalactiae serotype Ia (strain ATCC 27591 / A909 / CDC SS700).